The sequence spans 124 residues: Small ribosomal subunit protein uS12 (124 aa).

The residue at position 89 (Asp89) is a 3-methylthioaspartic acid.

This sequence belongs to the universal ribosomal protein uS12 family. As to quaternary structure, part of the 30S ribosomal subunit. Contacts proteins S8 and S17. May interact with IF1 in the 30S initiation complex.

With S4 and S5 plays an important role in translational accuracy. In terms of biological role, interacts with and stabilizes bases of the 16S rRNA that are involved in tRNA selection in the A site and with the mRNA backbone. Located at the interface of the 30S and 50S subunits, it traverses the body of the 30S subunit contacting proteins on the other side and probably holding the rRNA structure together. The combined cluster of proteins S8, S12 and S17 appears to hold together the shoulder and platform of the 30S subunit. This chain is Small ribosomal subunit protein uS12, found in Psychrobacter arcticus (strain DSM 17307 / VKM B-2377 / 273-4).